The primary structure comprises 277 residues: Proteasome assembly chaperone 1 (277 aa).

The protein belongs to the PSMG1 family. In terms of assembly, forms a heterodimer with psmg2. In terms of processing, degraded by the proteasome upon completion of 20S proteasome maturation.

It is found in the cytoplasm. The protein localises to the endoplasmic reticulum. Chaperone protein which promotes assembly of the 20S proteasome as part of a heterodimer with psmg2. This chain is Proteasome assembly chaperone 1, found in Danio rerio (Zebrafish).